A 266-amino-acid polypeptide reads, in one-letter code: MVDMAVTPVALLEASHLHYHVQQQALINDVSLHIASGEMVAIIGPNGAGKSTLLRLLTGYLSPSHGECHLLGQNLNSWQPKALARTRAVMRQYSELAFPFSVSEVIQMGRAPYGGSQDRQALQQVMAQTDCLALAQRDYRVLSGGEQQRVQLARVLAQLWQPQPTPRWLFLDEPTSALDLYHQQHTLRLLRQLTRQEPLAVCCVLHDLNLAALYADRIMLLAQGKLVACGTPEEVLNAETLTQWYQADLGVSRHPESALPQIYLRQ.

The 237-residue stretch at 12–248 (LEASHLHYHV…ETLTQWYQAD (237 aa)) folds into the ABC transporter domain. An ATP-binding site is contributed by 44 to 51 (GPNGAGKS).

It belongs to the ABC transporter superfamily. Heme (hemin) importer (TC 3.A.1.14.5) family. As to quaternary structure, the complex is composed of two ATP-binding proteins (HmuV), two transmembrane proteins (HmuU) and a solute-binding protein (HmuT).

The protein resides in the cell inner membrane. In terms of biological role, part of the ABC transporter complex HmuTUV involved in hemin import. Responsible for energy coupling to the transport system. This is Hemin import ATP-binding protein HmuV from Yersinia pestis bv. Antiqua (strain Antiqua).